The sequence spans 164 residues: MAEETAEKPVVESFQLDHTKVKAPYVRYIDTETGPHGDVISNYDLRLTQPNEQAIPTGGLHTIEHTIAVLLRERIPGYIDCSPFGCRTGFHLLTWGTHSTEDVAKALKESLEFIAYKATWDDVPATTEKSCGNYRDHSLFTAKEWAKLILEEGISSDPFERKVV.

Positions 61, 65, and 131 each coordinate Fe cation.

It belongs to the LuxS family. As to quaternary structure, homodimer. Fe cation is required as a cofactor.

The enzyme catalyses S-(5-deoxy-D-ribos-5-yl)-L-homocysteine = (S)-4,5-dihydroxypentane-2,3-dione + L-homocysteine. In terms of biological role, involved in the synthesis of autoinducer 2 (AI-2) which is secreted by bacteria and is used to communicate both the cell density and the metabolic potential of the environment. The regulation of gene expression in response to changes in cell density is called quorum sensing. Catalyzes the transformation of S-ribosylhomocysteine (RHC) to homocysteine (HC) and 4,5-dihydroxy-2,3-pentadione (DPD). The polypeptide is S-ribosylhomocysteine lyase (Bifidobacterium longum (strain NCC 2705)).